The sequence spans 213 residues: MSLLVKRWKELAEIKAELAARDWFFATSGNLSIKVTDDPLTFLVTASGKDKRKQTDEDFLLVDASGNPVENTHLKPSAETLLHVEIYKKTNAGCSLHVHTIDNNVISELYGDEGEVAFSGQEIIKAFGIWEEDAVIRIPIIPNYAHIPTLAKEFAKHVNGDAGAVLIRNHGITVWGRDAFEAKKFLEAWEFLFSWHVKWLLLKQTAVLPVVKP.

Zn(2+) contacts are provided by histidine 97 and histidine 99.

This sequence belongs to the aldolase class II family. MtnB subfamily. Homotetramer. Zn(2+) is required as a cofactor.

The enzyme catalyses 5-(methylsulfanyl)-D-ribulose 1-phosphate = 5-methylsulfanyl-2,3-dioxopentyl phosphate + H2O. Its pathway is amino-acid biosynthesis; L-methionine biosynthesis via salvage pathway; L-methionine from S-methyl-5-thio-alpha-D-ribose 1-phosphate: step 2/6. Functionally, catalyzes the dehydration of methylthioribulose-1-phosphate (MTRu-1-P) into 2,3-diketo-5-methylthiopentyl-1-phosphate (DK-MTP-1-P). This is Methylthioribulose-1-phosphate dehydratase from Geobacillus sp. (strain WCH70).